A 448-amino-acid chain; its full sequence is ATP-dependent protease ATPase subunit HslU (448 aa).

Residues Ile-23, 65-70, Asp-263, Glu-327, and Arg-399 each bind ATP; that span reads GIGKTE.

It belongs to the ClpX chaperone family. HslU subfamily. A double ring-shaped homohexamer of HslV is capped on each side by a ring-shaped HslU homohexamer. The assembly of the HslU/HslV complex is dependent on binding of ATP.

It is found in the cytoplasm. ATPase subunit of a proteasome-like degradation complex; this subunit has chaperone activity. The binding of ATP and its subsequent hydrolysis by HslU are essential for unfolding of protein substrates subsequently hydrolyzed by HslV. HslU recognizes the N-terminal part of its protein substrates and unfolds these before they are guided to HslV for hydrolysis. The polypeptide is ATP-dependent protease ATPase subunit HslU (Borreliella burgdorferi (strain ATCC 35210 / DSM 4680 / CIP 102532 / B31) (Borrelia burgdorferi)).